The chain runs to 394 residues: Elongation factor Tu (394 aa).

Residues 10 to 204 form the tr-type G domain; the sequence is KPHVNVGTIG…ALDSYIPEPE (195 aa). The tract at residues 19–26 is G1; it reads GHVDHGKT. 19–26 serves as a coordination point for GTP; the sequence is GHVDHGKT. Residue Thr26 coordinates Mg(2+). The G2 stretch occupies residues 60–64; that stretch reads GITIN. Positions 81–84 are G3; that stretch reads DCPG. GTP is bound by residues 81 to 85 and 136 to 139; these read DCPGH and NKCD. The G4 stretch occupies residues 136–139; sequence NKCD. Residues 174-176 form a G5 region; it reads SAL.

The protein belongs to the TRAFAC class translation factor GTPase superfamily. Classic translation factor GTPase family. EF-Tu/EF-1A subfamily. Monomer.

Its subcellular location is the cytoplasm. It catalyses the reaction GTP + H2O = GDP + phosphate + H(+). GTP hydrolase that promotes the GTP-dependent binding of aminoacyl-tRNA to the A-site of ribosomes during protein biosynthesis. The sequence is that of Elongation factor Tu from Shewanella sp. (strain ANA-3).